Reading from the N-terminus, the 168-residue chain is uncharacterized protein (168 aa).

Helical transmembrane passes span Tyr-15–Leu-33, Leu-41–Leu-57, Trp-73–Leu-93, Val-108–Asn-128, and Asn-129–Ile-149.

It localises to the cell membrane. This is an uncharacterized protein from Haemophilus influenzae (strain ATCC 51907 / DSM 11121 / KW20 / Rd).